Here is a 153-residue protein sequence, read N- to C-terminus: MTEVIAYLIEHFQDFDTCPPPEDLGMLLEEAGFDTMEIGNTLMMMEVLLNSSEFSAEPAGSGALRVYSKEETDNLPQEVMGLMQYLIEEKAVSCEQREIIIHALMHIPGDEITVDTAKVLTLLLLWANKSELPVLVGDELMSALLLDNKPTMN.

This sequence belongs to the Smg family.

This Neisseria gonorrhoeae (strain ATCC 700825 / FA 1090) protein is Protein Smg homolog.